Consider the following 137-residue polypeptide: Phosphoribosyl-AMP cyclohydrolase (137 aa).

Mg(2+) is bound at residue D84. Residue C85 coordinates Zn(2+). 2 residues coordinate Mg(2+): D86 and D88. Zn(2+) is bound by residues C101 and C108.

This sequence belongs to the PRA-CH family. As to quaternary structure, homodimer. Mg(2+) serves as cofactor. Zn(2+) is required as a cofactor.

It localises to the cytoplasm. It carries out the reaction 1-(5-phospho-beta-D-ribosyl)-5'-AMP + H2O = 1-(5-phospho-beta-D-ribosyl)-5-[(5-phospho-beta-D-ribosylamino)methylideneamino]imidazole-4-carboxamide. It participates in amino-acid biosynthesis; L-histidine biosynthesis; L-histidine from 5-phospho-alpha-D-ribose 1-diphosphate: step 3/9. Catalyzes the hydrolysis of the adenine ring of phosphoribosyl-AMP. In Chlorobium limicola (strain DSM 245 / NBRC 103803 / 6330), this protein is Phosphoribosyl-AMP cyclohydrolase.